We begin with the raw amino-acid sequence, 332 residues long: Galactinol synthase 7 (332 aa).

Residue Lys-101 is part of the active site. The Mn(2+) site is built by Asp-117, Asp-119, and His-255.

This sequence belongs to the glycosyltransferase 8 family. Galactosyltransferase subfamily. It depends on a divalent metal cation as a cofactor.

It is found in the cytoplasm. The enzyme catalyses myo-inositol + UDP-alpha-D-galactose = alpha-D-galactosyl-(1-&gt;3)-1D-myo-inositol + UDP + H(+). Galactinol synthase involved in the biosynthesis of raffinose family oligosaccharides (RFOs) that function as osmoprotectants. May promote plant stress tolerance. This is Galactinol synthase 7 (GOLS7) from Arabidopsis thaliana (Mouse-ear cress).